Consider the following 165-residue polypeptide: Glutamyl-tRNA(Gln) amidotransferase subunit F, mitochondrial (165 aa).

Residues 137–153 (VSDQRGERGFDTSELRT) are compositionally biased toward basic and acidic residues. The segment at 137–165 (VSDQRGERGFDTSELRTRINRAKSTAEKE) is disordered.

Belongs to the GatF family. Subunit of the heterotrimeric GatFAB amidotransferase (AdT) complex, composed of A, B and F subunits.

It is found in the mitochondrion inner membrane. It carries out the reaction L-glutamyl-tRNA(Gln) + L-glutamine + ATP + H2O = L-glutaminyl-tRNA(Gln) + L-glutamate + ADP + phosphate + H(+). In terms of biological role, allows the formation of correctly charged Gln-tRNA(Gln) through the transamidation of misacylated Glu-tRNA(Gln) in the mitochondria. The reaction takes place in the presence of glutamine and ATP through an activated gamma-phospho-Glu-tRNA(Gln). Required for proper protein synthesis within the mitochondrion. This chain is Glutamyl-tRNA(Gln) amidotransferase subunit F, mitochondrial, found in Clavispora lusitaniae (strain ATCC 42720) (Yeast).